The sequence spans 264 residues: Diphthine synthase (264 aa).

S-adenosyl-L-methionine contacts are provided by residues Leu-9, Asp-84, Val-87, Ser-112 to Ile-113, Leu-164, Ala-207, and His-232.

It belongs to the diphthine synthase family. Homodimer.

The catalysed reaction is 2-[(3S)-amino-3-carboxypropyl]-L-histidyl-[translation elongation factor 2] + 3 S-adenosyl-L-methionine = diphthine-[translation elongation factor 2] + 3 S-adenosyl-L-homocysteine + 3 H(+). The protein operates within protein modification; peptidyl-diphthamide biosynthesis. In terms of biological role, S-adenosyl-L-methionine-dependent methyltransferase that catalyzes the trimethylation of the amino group of the modified target histidine residue in translation elongation factor 2 (EF-2), to form an intermediate called diphthine. The three successive methylation reactions represent the second step of diphthamide biosynthesis. The chain is Diphthine synthase from Methanothermobacter thermautotrophicus (strain ATCC 29096 / DSM 1053 / JCM 10044 / NBRC 100330 / Delta H) (Methanobacterium thermoautotrophicum).